The following is a 98-amino-acid chain: NADH-ubiquinone oxidoreductase chain 4L (98 aa).

Helical transmembrane passes span proline 2–phenylalanine 22, serine 29–leucine 49, and isoleucine 61–valine 81.

It belongs to the complex I subunit 4L family. Core subunit of respiratory chain NADH dehydrogenase (Complex I) which is composed of 45 different subunits.

It localises to the mitochondrion inner membrane. It catalyses the reaction a ubiquinone + NADH + 5 H(+)(in) = a ubiquinol + NAD(+) + 4 H(+)(out). Core subunit of the mitochondrial membrane respiratory chain NADH dehydrogenase (Complex I) which catalyzes electron transfer from NADH through the respiratory chain, using ubiquinone as an electron acceptor. Part of the enzyme membrane arm which is embedded in the lipid bilayer and involved in proton translocation. The sequence is that of NADH-ubiquinone oxidoreductase chain 4L (MT-ND4L) from Avahi unicolor (Sambirano woolly lemur).